The primary structure comprises 312 residues: Dihydroorotate dehydrogenase B (NAD(+)), catalytic subunit (312 aa).

FMN contacts are provided by residues Ser-23 and 47-48; that span reads KA. Substrate is bound by residues Lys-47 and 71-75; that span reads NAIGL. 2 residues coordinate FMN: Asn-103 and Asn-131. A substrate-binding site is contributed by Asn-131. Catalysis depends on Cys-134, which acts as the Nucleophile. Lys-171 and Ile-197 together coordinate FMN. Residue 198–199 participates in substrate binding; it reads NT. FMN is bound by residues Gly-223, 249 to 250, and 271 to 272; these read GG and GT.

The protein belongs to the dihydroorotate dehydrogenase family. Type 1 subfamily. As to quaternary structure, heterotetramer of 2 PyrK and 2 PyrD type B subunits. FMN serves as cofactor.

The protein resides in the cytoplasm. It carries out the reaction (S)-dihydroorotate + NAD(+) = orotate + NADH + H(+). It participates in pyrimidine metabolism; UMP biosynthesis via de novo pathway; orotate from (S)-dihydroorotate (NAD(+) route): step 1/1. Functionally, catalyzes the conversion of dihydroorotate to orotate with NAD(+) as electron acceptor. This is Dihydroorotate dehydrogenase B (NAD(+)), catalytic subunit (pyrDB) from Streptococcus pneumoniae serotype 4 (strain ATCC BAA-334 / TIGR4).